A 251-amino-acid polypeptide reads, in one-letter code: 3-isopropylmalate dehydratase small subunit 1 (251 aa).

A chloroplast-targeting transit peptide spans 1–59 (MAASLQSANPTLSRTLASPNKPSSFATFRSPFLRFNSTSVASNFKPLVSREASSSFVTR).

It belongs to the LeuD family. In terms of assembly, heterodimer of the large LEUC/IIL1 subunit and the small LEUD (SSU1, SSU2 or SSU3) subunits. As to expression, expressed at low levels in roots, root tips, at the basis of the hypocotyls, and in emerging leaves. In young seedlings, expressed in cotyledon epidermal cells. In hypocotyls, expressed in peripheral cells. In seedling roots, expressed in the epidermis, including root hairs, and throughout the cortex. In rosette leaves, expressed in the upper and lower epidermis. In roots of adult plants, expressed in the root tips and cortex of the mature root enclosing the stele. In flowering stalks, expressed in the epidermis. Expressed in the carpel epidermis.

The protein localises to the plastid. The protein resides in the chloroplast stroma. It catalyses the reaction (2R,3S)-3-isopropylmalate = (2S)-2-isopropylmalate. It functions in the pathway amino-acid biosynthesis; L-leucine biosynthesis; L-leucine from 3-methyl-2-oxobutanoate: step 2/4. Catalyzes the isomerization between 2-isopropylmalate and 3-isopropylmalate, via the formation of 2-isopropylmaleate. Plays an essential role in leucine biosynthesis. Functions in both the biosynthesis of leucine, and in the methionine chain elongation pathway of aliphatic glucosinolate formation. Plays an essential role in female gametophyte development. The polypeptide is 3-isopropylmalate dehydratase small subunit 1 (Arabidopsis thaliana (Mouse-ear cress)).